The sequence spans 504 residues: Maturase K (504 aa).

This sequence belongs to the intron maturase 2 family. MatK subfamily.

It is found in the plastid. Its subcellular location is the chloroplast. Its function is as follows. Usually encoded in the trnK tRNA gene intron. Probably assists in splicing its own and other chloroplast group II introns. The polypeptide is Maturase K (Erythrina crista-galli (Cockspur coral tree)).